The sequence spans 365 residues: Pectate trisaccharide-lyase (365 aa).

Residues 1–25 (MRFSRVVSLVLLLVFTAVLTGAVKA) form the signal peptide. Residues Asp142, Asp164, and Asp168 each coordinate Ca(2+). Residues 149-171 (SHHIWIDHCTFVNGNDGAVDIKK) form a PbH1 1 repeat. Arg222 is an active-site residue. The PbH1 2 repeat unit spans residues 261–287 (GAKVHVEGNYFMGYGAVMAEAGIAFLP).

This sequence belongs to the polysaccharide lyase 1 family. In terms of assembly, homotetramer. It depends on Ca(2+) as a cofactor.

The protein localises to the secreted. It catalyses the reaction eliminative cleavage of unsaturated trigalacturonate as the major product from the reducing end of polygalacturonic acid/pectate.. Its function is as follows. Cleaves unsaturated trigalacturonate from pectin. Activity is highest towards polygalacturonic acid, activity on methylated pectins decreases with an increasing degree of methylation. The chain is Pectate trisaccharide-lyase from Thermotoga sp. (strain RQ2).